A 513-amino-acid polypeptide reads, in one-letter code: ATP synthase subunit alpha (513 aa).

169-176 (GDRQTGKT) contacts ATP.

The protein belongs to the ATPase alpha/beta chains family. F-type ATPases have 2 components, CF(1) - the catalytic core - and CF(0) - the membrane proton channel. CF(1) has five subunits: alpha(3), beta(3), gamma(1), delta(1), epsilon(1). CF(0) has three main subunits: a(1), b(2) and c(9-12). The alpha and beta chains form an alternating ring which encloses part of the gamma chain. CF(1) is attached to CF(0) by a central stalk formed by the gamma and epsilon chains, while a peripheral stalk is formed by the delta and b chains.

Its subcellular location is the cell inner membrane. It carries out the reaction ATP + H2O + 4 H(+)(in) = ADP + phosphate + 5 H(+)(out). Its function is as follows. Produces ATP from ADP in the presence of a proton gradient across the membrane. The alpha chain is a regulatory subunit. The chain is ATP synthase subunit alpha from Shewanella amazonensis (strain ATCC BAA-1098 / SB2B).